The primary structure comprises 67 residues: Probable Sec-independent protein translocase protein TatE (67 aa).

Residues 4–21 form a helical membrane-spanning segment; that stretch reads ISITKLLVVAALVVLLFG.

It belongs to the TatA/E family. TatE subfamily.

It is found in the cell inner membrane. Its function is as follows. Part of the twin-arginine translocation (Tat) system that transports large folded proteins containing a characteristic twin-arginine motif in their signal peptide across membranes. TatE shares overlapping functions with TatA. In Shigella flexneri, this protein is Probable Sec-independent protein translocase protein TatE.